The chain runs to 168 residues: SPbeta prophage-derived uncharacterized protein YonX (168 aa).

The stretch at methionine 1 to asparagine 53 forms a coiled coil.

This chain is SPbeta prophage-derived uncharacterized protein YonX (yonX), found in Bacillus subtilis (strain 168).